A 234-amino-acid polypeptide reads, in one-letter code: Large ribosomal subunit protein uL1 (234 aa).

Belongs to the universal ribosomal protein uL1 family. Part of the 50S ribosomal subunit.

In terms of biological role, binds directly to 23S rRNA. The L1 stalk is quite mobile in the ribosome, and is involved in E site tRNA release. Functionally, protein L1 is also a translational repressor protein, it controls the translation of the L11 operon by binding to its mRNA. Peptides originating from the N-terminal end of L1 have antibacterial activity against bacteria such as E.coli and B.megaterium and modest antifungal activities. Has no effect on H.pylori itself. Peptides are not hemolytic against mammalian cells. These peptides may be released in the stomach during altruistic lysis to kill other fast growing bacteria. This Helicobacter pylori (strain ATCC 700392 / 26695) (Campylobacter pylori) protein is Large ribosomal subunit protein uL1.